The following is a 1261-amino-acid chain: ABC-type transmembrane transporter verA (1261 aa).

Residues 41 to 61 (IGCAFAAVCSGAAMPLMALIL) form a helical membrane-spanning segment. The 294-residue stretch at 41 to 334 (IGCAFAAVCS…LGPNMPSFIK (294 aa)) folds into the ABC transmembrane type-1 1 domain. Asn-67 is a glycosylation site (N-linked (GlcNAc...) asparagine). The next 5 helical transmembrane spans lie at 92–112 (LWFV…SFGF), 166–186 (LGIM…AFSQ), 190–210 (LTLV…FIVS), 270–290 (FVGL…AIGF), and 308–328 (ILSV…LGPN). Residues 374 to 618 (VELRDMSFAY…GGLYKRLYDA (245 aa)) form the ABC transporter 1 domain. The N-linked (GlcNAc...) asparagine glycan is linked to Asn-396. 409 to 416 (GPSGAGKS) is a binding site for ATP. An N-linked (GlcNAc...) asparagine glycan is attached at Asn-463. Transmembrane regions (helical) follow at residues 686-706 (YWPI…IFPV), 734-754 (LMFF…GFFM), 808-828 (MGLL…GLAY), 830-850 (WKFA…AGYL), 913-933 (VMTL…ALGF), and 950-970 (FFTV…LFGF). Residues 691-976 (LIGLVACVVT…LFGFSSNLGK (286 aa)) enclose the ABC transmembrane type-1 2 domain. 2 N-linked (GlcNAc...) asparagine glycosylation sites follow: Asn-1007 and Asn-1021. The region spanning 1017–1255 (VDMQNVTFAY…QGNYFKMHES (239 aa)) is the ABC transporter 2 domain. Residue 1052–1059 (GTSGSGKS) participates in ATP binding. The N-linked (GlcNAc...) asparagine glycan is linked to Asn-1106.

Belongs to the ABC transporter superfamily. ABCB family. Multidrug resistance exporter (TC 3.A.1.201) subfamily.

The protein localises to the cell membrane. Its function is as follows. ABC-type transmembrane transporter; part of the gene cluster that mediates the biosynthesis of 11'-deoxyverticillin A, one of the dimeric epipolythiodioxopiperazines (ETPs) from the verticillin family that are toxic secondary metabolites. The verA multidrug transporter is probably involved in the secretion of 11'-deoxyverticillin A. This chain is ABC-type transmembrane transporter verA, found in Clonostachys rogersoniana.